The chain runs to 772 residues: Calcium-binding mitochondrial carrier protein (772 aa).

The segment at 1–377 (MFANRVRQAQ…SISDFEKSTG (377 aa)) is N-terminal domain. EF-hand domains follow at residues 132–165 (LDADKFKVLFQMADVDHTGYISFDEYVMFDELMA), 166–201 (KPEAEYFLAFKLFDRDGNGYISKNDFKHVITASLDP), 235–270 (LQQERIKQEFKFHDKYNSGYIPRDKFAKVLGSVKLR), and 347–382 (ITPLEIDLIFHLFDLNKDGKLSISDFEKSTGLNINK). 10 residues coordinate Ca(2+): Asp145, Asp147, Thr149, Tyr151, Glu156, Asp179, Asp181, Asn183, Tyr185, and Asp190. Ca(2+) contacts are provided by Asp360, Asn362, Asp364, Lys366, and Asp371. The tract at residues 378–422 (LNINKIGGGTNYSDSYPSDSHVTIQNSSTTPSPSTPITNTAAAIA) is linker loop domain. A carrier domain region spans residues 432-720 (AQQVLESIEN…KALLPDAEYK (289 aa)). 3 Solcar repeats span residues 436–526 (LESI…LRDL), 535–616 (IYFP…MKTI), and 624–712 (LGPM…LQKA). The next 6 helical transmembrane spans lie at 442-459 (FALGSIAGGIGAAAVYPI), 501-520 (GILPQMVGVAPEKAIKLTVN), 545-558 (GFAGMSQVCVTNPL), 591-610 (GAGACLLRDIPFSAIYFPTY), 630-647 (LLAGAVAGIPAASLVTPA), and 687-706 (GALARVFRSSPQFGVTLVSY). The C-terminal domain stretch occupies residues 721–772 (PPTNAPITQKDFDVIRGNTNTVQRVIDMESKFGTLHQTRDNNKSSNGGENKN). The disordered stretch occupies residues 751–772 (KFGTLHQTRDNNKSSNGGENKN). The span at 763-772 (KSSNGGENKN) shows a compositional bias: low complexity.

Belongs to the mitochondrial carrier (TC 2.A.29) family. As to quaternary structure, homodimer (via N-terminus).

Its subcellular location is the mitochondrion inner membrane. Mitochondrial and calcium-binding carrier that catalyzes the calcium-dependent exchange of cytoplasmic glutamate with mitochondrial aspartate across the mitochondrial inner membrane. The protein is Calcium-binding mitochondrial carrier protein (mcfO) of Dictyostelium discoideum (Social amoeba).